We begin with the raw amino-acid sequence, 89 residues long: Small ribosomal subunit protein uS15 (89 aa).

This sequence belongs to the universal ribosomal protein uS15 family. In terms of assembly, part of the 30S ribosomal subunit. Forms a bridge to the 50S subunit in the 70S ribosome, contacting the 23S rRNA.

One of the primary rRNA binding proteins, it binds directly to 16S rRNA where it helps nucleate assembly of the platform of the 30S subunit by binding and bridging several RNA helices of the 16S rRNA. Its function is as follows. Forms an intersubunit bridge (bridge B4) with the 23S rRNA of the 50S subunit in the ribosome. The chain is Small ribosomal subunit protein uS15 from Mycobacterium marinum (strain ATCC BAA-535 / M).